The primary structure comprises 240 residues: Probable septum site-determining protein MinC (240 aa).

It belongs to the MinC family. In terms of assembly, interacts with MinD and FtsZ.

In terms of biological role, cell division inhibitor that blocks the formation of polar Z ring septums. Rapidly oscillates between the poles of the cell to destabilize FtsZ filaments that have formed before they mature into polar Z rings. Prevents FtsZ polymerization. This chain is Probable septum site-determining protein MinC, found in Acinetobacter baylyi (strain ATCC 33305 / BD413 / ADP1).